A 769-amino-acid polypeptide reads, in one-letter code: Cap-specific mRNA (nucleoside-2'-O-)-methyltransferase 2 (769 aa).

One can recognise an Adrift-type SAM-dependent 2'-O-MTase domain in the interval E109–G322. K117 is a catalytic residue. Positions 148, 167, and 235 each coordinate S-adenosyl-L-methionine. Residue D235 is part of the active site. K275 functions as the Proton acceptor in the catalytic mechanism.

Its subcellular location is the nucleus. The protein resides in the cytoplasm. It carries out the reaction a 5'-end (N(7)-methyl 5'-triphosphoguanosine)-(2'-O-methyl-ribonucleoside)-(ribonucleotide) in mRNA + S-adenosyl-L-methionine = a 5'-end (N(7)-methyl 5'-triphosphoguanosine)-(2'-O-methyl-ribonucleoside)-(2'-O-methyl-ribonucleotide) in mRNA + S-adenosyl-L-homocysteine + H(+). Its function is as follows. S-adenosyl-L-methionine-dependent methyltransferase that mediates mRNA cap2 2'-O-ribose methylation to the 5'-cap structure of mRNAs. Methylates the ribose of the second nucleotide of a m(7)GpppG-capped mRNA and small nuclear RNA (snRNA) (cap0) to produce m(7)GpppRmpNm (cap2). Recognizes a guanosine cap on RNA independently of its N(7) methylation status. Display cap2 methylation on both cap0 and cap1. Displays a preference for cap1 RNAs. This Pongo abelii (Sumatran orangutan) protein is Cap-specific mRNA (nucleoside-2'-O-)-methyltransferase 2 (CMTR2).